The following is a 448-amino-acid chain: Phosphoglucosamine mutase (448 aa).

Residue serine 101 is the Phosphoserine intermediate of the active site. Serine 101, aspartate 242, aspartate 244, and aspartate 246 together coordinate Mg(2+). At serine 101 the chain carries Phosphoserine.

The protein belongs to the phosphohexose mutase family. Mg(2+) serves as cofactor. In terms of processing, activated by phosphorylation.

The enzyme catalyses alpha-D-glucosamine 1-phosphate = D-glucosamine 6-phosphate. Catalyzes the conversion of glucosamine-6-phosphate to glucosamine-1-phosphate. The sequence is that of Phosphoglucosamine mutase from Afipia carboxidovorans (strain ATCC 49405 / DSM 1227 / KCTC 32145 / OM5) (Oligotropha carboxidovorans).